A 335-amino-acid polypeptide reads, in one-letter code: tRNA N6-adenosine threonylcarbamoyltransferase (335 aa).

His111 and His115 together coordinate Fe cation. Residues 133–137 (LISGG), Asp166, Gly179, and Asn276 each bind substrate. Asp301 is a Fe cation binding site.

This sequence belongs to the KAE1 / TsaD family. Fe(2+) serves as cofactor.

The protein localises to the cytoplasm. The catalysed reaction is L-threonylcarbamoyladenylate + adenosine(37) in tRNA = N(6)-L-threonylcarbamoyladenosine(37) in tRNA + AMP + H(+). In terms of biological role, required for the formation of a threonylcarbamoyl group on adenosine at position 37 (t(6)A37) in tRNAs that read codons beginning with adenine. Is involved in the transfer of the threonylcarbamoyl moiety of threonylcarbamoyl-AMP (TC-AMP) to the N6 group of A37, together with TsaE and TsaB. TsaD likely plays a direct catalytic role in this reaction. In Wolbachia sp. subsp. Brugia malayi (strain TRS), this protein is tRNA N6-adenosine threonylcarbamoyltransferase.